Reading from the N-terminus, the 281-residue chain is Digeranylgeranylglyceryl phosphate synthase (281 aa).

Transmembrane regions (helical) follow at residues 14–34 (AMAAFAGLIGVLIAYNILSSA), 38–58 (VSLSLFDTSLIFAIVFLVTGA), 95–115 (LFLFITGITLAFLVNPLCGII), 149–169 (FLFGGAVFGMAGLQALVVLFL), 207–227 (ASYIAAAFGFTAMLASPVPYL), 235–255 (YLFVVAIADIFFLIAVYQILG), and 259–279 (AARSSKLFKFAMLFALISFIV).

This sequence belongs to the UbiA prenyltransferase family. DGGGP synthase subfamily. The cofactor is Mg(2+).

Its subcellular location is the cell membrane. The catalysed reaction is sn-3-O-(geranylgeranyl)glycerol 1-phosphate + (2E,6E,10E)-geranylgeranyl diphosphate = 2,3-bis-O-(geranylgeranyl)-sn-glycerol 1-phosphate + diphosphate. It participates in membrane lipid metabolism; glycerophospholipid metabolism. In terms of biological role, prenyltransferase that catalyzes the transfer of the geranylgeranyl moiety of geranylgeranyl diphosphate (GGPP) to the C2 hydroxyl of (S)-3-O-geranylgeranylglyceryl phosphate (GGGP). This reaction is the second ether-bond-formation step in the biosynthesis of archaeal membrane lipids. This is Digeranylgeranylglyceryl phosphate synthase from Methanococcoides burtonii (strain DSM 6242 / NBRC 107633 / OCM 468 / ACE-M).